The chain runs to 295 residues: Glutamate-binding protein GluB (295 aa).

An N-terminal signal peptide occupies residues Met1–Ala26. Cys27 is lipidated: N-palmitoyl cysteine. Cys27 carries S-diacylglycerol cysteine lipidation.

It belongs to the bacterial solute-binding protein 3 family. As to quaternary structure, the complex is composed of two ATP-binding proteins (GluA), two transmembrane proteins (GluC and GluD) and a solute-binding protein (GluB).

It localises to the cell membrane. Its activity is regulated as follows. Binding of glutamate or asparatate induces a higher thermal stability of the protein structure. In terms of biological role, part of the ABC transporter complex GluABCD involved in glutamate uptake. Binds glutamate with a high affinity. Also binds aspartate with high affinity, suggesting that GluB could be involved in the transport of both amino acid residues into the cell. The chain is Glutamate-binding protein GluB from Corynebacterium glutamicum (strain ATCC 13032 / DSM 20300 / JCM 1318 / BCRC 11384 / CCUG 27702 / LMG 3730 / NBRC 12168 / NCIMB 10025 / NRRL B-2784 / 534).